A 471-amino-acid chain; its full sequence is MAKAPVLTPRADDFPRWYQDLINKAELADNGPVRGTMVIRPYGYGLWERMQQEMDARIKETGTQNAYFPLLIPQSYLTKEADHVEGFAPELAVVTHGGGKELEEPAVVRPTSEMIINDYFSKWVQSYRDLPLLINQWANVVRWELRPRLFLRTTEFLWQEGHTAHATYEEARDFAAHIHRHVYADFMENVLAMDVVLGRKTAKERFAGAVNTLTLEGMMGDGKALQMGTSHELGQNFARAFHTQYLSKEGKQELVWQTSWGSTTRMIGALVMMHGDDNGLRVPPRLAQTQVVVLAIKGDEAVLAKVRETGDRLKAAGLRVQVDDRTDVPFGRRAVDWELKGVPVRVEVGPRDLENGTAMVARRIPGGKEPVALDALAALLPTALEEDQALLLRQARERRASRTSDVSTIEEAVEAAAGGGWARIPWATLGERGEAELAEHAASVRCLVAEDGSVPGADDAPGNVAVVARAY.

The protein belongs to the class-II aminoacyl-tRNA synthetase family. ProS type 3 subfamily. Homodimer.

The protein resides in the cytoplasm. It carries out the reaction tRNA(Pro) + L-proline + ATP = L-prolyl-tRNA(Pro) + AMP + diphosphate. Its function is as follows. Catalyzes the attachment of proline to tRNA(Pro) in a two-step reaction: proline is first activated by ATP to form Pro-AMP and then transferred to the acceptor end of tRNA(Pro). The polypeptide is Proline--tRNA ligase 2 (Streptomyces avermitilis (strain ATCC 31267 / DSM 46492 / JCM 5070 / NBRC 14893 / NCIMB 12804 / NRRL 8165 / MA-4680)).